A 309-amino-acid polypeptide reads, in one-letter code: Formimidoylglutamase (309 aa).

Residues His-128, Asp-153, His-155, Asp-157, Cys-240, and Asp-242 each contribute to the Mn(2+) site.

It belongs to the arginase family. Mn(2+) serves as cofactor.

The enzyme catalyses N-formimidoyl-L-glutamate + H2O = formamide + L-glutamate. Its pathway is amino-acid degradation; L-histidine degradation into L-glutamate; L-glutamate from N-formimidoyl-L-glutamate (hydrolase route): step 1/1. Catalyzes the conversion of N-formimidoyl-L-glutamate to L-glutamate and formamide. This is Formimidoylglutamase from Staphylococcus carnosus (strain TM300).